The primary structure comprises 256 residues: MDSHSPIATVAQALRRAERILVITGAGLSADSGMPTYRGLGGLYNGRTEEGLPIEAALSGPMLRRDPALCWKYLAELGKACLAARPNAGHEAIAELQKHKPECWVLTQNIDGFHRQAGSPAERLIEIHGELAPLYCQSCGAESGGLEEHLHGQLPPRCAACGGVLRPPVVLFEEMLPEEAIDTLYRELRKGFDAVLVVGTTASFPYIVEPVLRTRQAGGFTAEVNPGVTDLSERVDVKMTGRALDIMPQVVSHIYR.

One can recognise a Deacetylase sirtuin-type domain in the interval 1–256; it reads MDSHSPIATV…MPQVVSHIYR (256 aa). NAD(+) contacts are provided by residues 25-44 and 108-111; these read GAGL…GGLY and QNID. H128 serves as the catalytic Proton acceptor. The Zn(2+) site is built by C136, C139, C158, and C161. NAD(+) is bound by residues 199–201, 225–227, and A243; these read GTT and NPG.

It belongs to the sirtuin family. Class III subfamily. Requires Zn(2+) as cofactor.

It is found in the cytoplasm. It catalyses the reaction N(6)-acetyl-L-lysyl-[protein] + NAD(+) + H2O = 2''-O-acetyl-ADP-D-ribose + nicotinamide + L-lysyl-[protein]. Its function is as follows. NAD-dependent protein deacetylase which modulates the activities of several proteins which are inactive in their acetylated form. The protein is NAD-dependent protein deacylase 2 (cobB2) of Pseudomonas aeruginosa (strain ATCC 15692 / DSM 22644 / CIP 104116 / JCM 14847 / LMG 12228 / 1C / PRS 101 / PAO1).